Consider the following 331-residue polypeptide: MTIITINIPSLTPHPCVEYWSVCKVEALFETPFLELVYQAAQVHRKHFNPQTIQLSTLMSIKTGGCPEDCSYCPQSARYHTGVQNQQLLCVEEIVEKAKIAKSRGAGRFCMGAAWRGPKPKDIEKITEIIKAVKDLGLETCGTFGLLQDGMAEELKEAGLDYYNHNIDTAPEHYKEIIGTRDFDDRLNTLGKVRKAGLKVCCGGIVGMNETRKERAGLIASLANLDPQPESVPINQLVKVEGTPLADAQELDWTEFVRTIAVARITMPKSYVRLSAGRQGMSEEMQAMCFMAGANSIFYGDKLLVTVNPEEDGDQLLMAKLDLKPETQENK.

The Radical SAM core domain occupies 51–278 (QTIQLSTLMS…KSYVRLSAGR (228 aa)). Residues Cys-66, Cys-70, and Cys-73 each coordinate [4Fe-4S] cluster. Residues Cys-110, Cys-141, Cys-201, and Arg-273 each contribute to the [2Fe-2S] cluster site.

This sequence belongs to the radical SAM superfamily. Biotin synthase family. In terms of assembly, homodimer. [4Fe-4S] cluster serves as cofactor. The cofactor is [2Fe-2S] cluster.

It carries out the reaction (4R,5S)-dethiobiotin + (sulfur carrier)-SH + 2 reduced [2Fe-2S]-[ferredoxin] + 2 S-adenosyl-L-methionine = (sulfur carrier)-H + biotin + 2 5'-deoxyadenosine + 2 L-methionine + 2 oxidized [2Fe-2S]-[ferredoxin]. It participates in cofactor biosynthesis; biotin biosynthesis; biotin from 7,8-diaminononanoate: step 2/2. Catalyzes the conversion of dethiobiotin (DTB) to biotin by the insertion of a sulfur atom into dethiobiotin via a radical-based mechanism. In Histophilus somni (strain 129Pt) (Haemophilus somnus), this protein is Biotin synthase.